We begin with the raw amino-acid sequence, 496 residues long: uncharacterized protein (496 aa).

7 residues coordinate Mg(2+): Asp-36, Asp-81, Glu-300, Glu-302, Asp-321, Asp-323, and Asp-375.

This sequence belongs to the XPG/RAD2 endonuclease family. FEN1 subfamily. Requires Mg(2+) as cofactor.

This is an uncharacterized protein from Schizosaccharomyces pombe (strain 972 / ATCC 24843) (Fission yeast).